Reading from the N-terminus, the 108-residue chain is Small ribosomal subunit protein bS16 (108 aa).

The protein belongs to the bacterial ribosomal protein bS16 family.

In Orientia tsutsugamushi (strain Boryong) (Rickettsia tsutsugamushi), this protein is Small ribosomal subunit protein bS16.